The sequence spans 138 residues: uncharacterized protein (138 aa).

The next 2 helical transmembrane spans lie at 21 to 43 and 48 to 65; these read TAFI…AGGA and SLIA…YAII.

The protein resides in the cell membrane. This is an uncharacterized protein from Archaeoglobus fulgidus (strain ATCC 49558 / DSM 4304 / JCM 9628 / NBRC 100126 / VC-16).